A 252-amino-acid chain; its full sequence is Geranylgeranylglyceryl phosphate synthase (252 aa).

2 residues coordinate Mg(2+): Asp22 and Ser51. Residues 170–176, 201–202, and 223–224 contribute to the sn-glycerol 1-phosphate site; these read YFEAGSG, GG, and GS.

Belongs to the GGGP/HepGP synthase family. Group II subfamily. Mg(2+) serves as cofactor.

Its subcellular location is the cytoplasm. The catalysed reaction is sn-glycerol 1-phosphate + (2E,6E,10E)-geranylgeranyl diphosphate = sn-3-O-(geranylgeranyl)glycerol 1-phosphate + diphosphate. It participates in membrane lipid metabolism; glycerophospholipid metabolism. In terms of biological role, prenyltransferase that catalyzes the transfer of the geranylgeranyl moiety of geranylgeranyl diphosphate (GGPP) to the C3 hydroxyl of sn-glycerol-1-phosphate (G1P). This reaction is the first ether-bond-formation step in the biosynthesis of archaeal membrane lipids. This Thermoplasma volcanium (strain ATCC 51530 / DSM 4299 / JCM 9571 / NBRC 15438 / GSS1) protein is Geranylgeranylglyceryl phosphate synthase.